The sequence spans 462 residues: DEK domain-containing chromatin-associated protein 1 (462 aa).

Disordered stretches follow at residues Ala-18–Arg-91 and Lys-212–Leu-390. Basic and acidic residues predominate over residues Thr-20–Val-32. Residues Glu-33–Asp-46 show a composition bias toward acidic residues. The segment covering Pro-77–Arg-91 has biased composition (polar residues). Residues Asn-267–Glu-276 show a composition bias toward acidic residues. 3 stretches are compositionally biased toward basic and acidic residues: residues Glu-277–Lys-303, Glu-312–Ile-322, and Gln-347–Lys-360. The short motif at Ser-344–Lys-351 is the Nuclear localization signal element. One can recognise a DEK-C domain in the interval Glu-384–Asn-439. 2 consecutive DNA-binding regions follow at residues Asp-402–Gly-416 and Lys-431–Thr-435. A disordered region spans residues Ile-438–Asp-462. Residues Met-441 to Asp-462 show a composition bias toward acidic residues.

Found in a mRNA splicing-dependent exon junction complex (EJC). Binds specifically histones H3 and H4.

It localises to the nucleus. The protein localises to the nucleolus. Functionally, chromatin-associated protein which contributes to the modulation of chromatin structure (such as super-helical structure of DNA) and function. Binds to chromatin of protein-coding genes throughout the genome to regulate nucleosome occupancy and chromatin accessibility, and to modulate the expression of target genes. This is DEK domain-containing chromatin-associated protein 1 from Arabidopsis thaliana (Mouse-ear cress).